A 143-amino-acid chain; its full sequence is uncharacterized protein (143 aa).

This is an uncharacterized protein from Mycobacterium tuberculosis (strain CDC 1551 / Oshkosh).